Here is a 310-residue protein sequence, read N- to C-terminus: Methionyl-tRNA formyltransferase (310 aa).

110-113 provides a ligand contact to (6S)-5,6,7,8-tetrahydrofolate; sequence SVLP.

It belongs to the Fmt family.

It catalyses the reaction L-methionyl-tRNA(fMet) + (6R)-10-formyltetrahydrofolate = N-formyl-L-methionyl-tRNA(fMet) + (6S)-5,6,7,8-tetrahydrofolate + H(+). Its function is as follows. Attaches a formyl group to the free amino group of methionyl-tRNA(fMet). The formyl group appears to play a dual role in the initiator identity of N-formylmethionyl-tRNA by promoting its recognition by IF2 and preventing the misappropriation of this tRNA by the elongation apparatus. This Mycolicibacterium vanbaalenii (strain DSM 7251 / JCM 13017 / BCRC 16820 / KCTC 9966 / NRRL B-24157 / PYR-1) (Mycobacterium vanbaalenii) protein is Methionyl-tRNA formyltransferase.